A 148-amino-acid polypeptide reads, in one-letter code: METPFWKTKTLEQMSPAEWESLCDGCGKCCLSKLEDEDTGEIYWTSVGCRLFDAQTCRCSDYANRLARVPDCVGLTPQNVRTISWLPSTCAYRLVAEGRDLYWWHRLVSGSAETVHEAGISMRGRVKASETDLAEPEDYFDYMLDDEP.

This sequence belongs to the UPF0260 family.

The protein is UPF0260 protein mll2411 of Mesorhizobium japonicum (strain LMG 29417 / CECT 9101 / MAFF 303099) (Mesorhizobium loti (strain MAFF 303099)).